The primary structure comprises 157 residues: Pyruvoyl-dependent arginine decarboxylase 2 (157 aa).

S43 is subject to Pyruvic acid (Ser).

Belongs to the PdaD family. The cofactor is pyruvate.

It catalyses the reaction L-arginine + H(+) = agmatine + CO2. The chain is Pyruvoyl-dependent arginine decarboxylase 2 (pdaD2) from Archaeoglobus fulgidus (strain ATCC 49558 / DSM 4304 / JCM 9628 / NBRC 100126 / VC-16).